We begin with the raw amino-acid sequence, 659 residues long: Checkpoint protein RAD24 (659 aa).

The tract at residues 24-54 (TKWSSSRPTSPVRKARSTENDFLSKQDTSSI) is disordered. 109–116 (GPSGCSKS) contributes to the ATP binding site. Positions 596-612 (EDEETSFNDDPIVDSDS) are enriched in acidic residues. The segment at 596-659 (EDEETSFNDD…SLSDSDLEIL (64 aa)) is disordered. 2 positions are modified to phosphoserine: S652 and S654.

It belongs to the rad17/RAD24 family. As to quaternary structure, component of the RAD24-RFC complex which consists of RAD14, RFC2, RFC3, RFC4 and RFC5 and associates with the checkpoint clamp DDC1:MEC3:RAD17 complex. RAD24 interacts with ECO1.

The protein resides in the nucleus. In terms of biological role, participates in checkpoint pathways arrest of the cell cycle, a mechanism that allows the DNA repair pathways to act to restore the integrity of the DNA prior to DNA synthesis or separation of the replicated chromosomes. Regulates the DNA damage checkpoint pathway throughout the cell cycle, when associated with RCF5. Component of the RFC-like RAD24-RFC complex which loads the checkpoint clamp DDC1:MEC3:RAD17 complex and is involved in DNA repair pathways. During a clamp loading circle, the RFC:clamp complex binds to DNA and the recognition of the double-stranded/single-stranded junction stimulates ATP hydrolysis by RFC. The complex presumably provides bipartite ATP sites in which one subunit supplies a catalytic site for hydrolysis of ATP bound to the neighboring subunit. Dissociation of RFC from the clamp leaves the clamp encircling DNA. This chain is Checkpoint protein RAD24 (RAD24), found in Saccharomyces cerevisiae (strain ATCC 204508 / S288c) (Baker's yeast).